A 240-amino-acid chain; its full sequence is Uridylate kinase (240 aa).

Position 13 to 16 (13 to 16 (KASG)) interacts with ATP. Positions 21–26 (GSQGFG) are involved in allosteric activation by GTP. Gly-55 provides a ligand contact to UMP. ATP is bound by residues Gly-56 and Arg-60. UMP is bound by residues Asp-75 and 136 to 143 (TGNPFFTT). Thr-163, Gln-164, Tyr-169, and Asp-172 together coordinate ATP.

It belongs to the UMP kinase family. Homohexamer.

The protein resides in the cytoplasm. The enzyme catalyses UMP + ATP = UDP + ADP. Its pathway is pyrimidine metabolism; CTP biosynthesis via de novo pathway; UDP from UMP (UMPK route): step 1/1. With respect to regulation, allosterically activated by GTP. Inhibited by UTP. Its function is as follows. Catalyzes the reversible phosphorylation of UMP to UDP. This is Uridylate kinase from Sinorhizobium medicae (strain WSM419) (Ensifer medicae).